The following is a 235-amino-acid chain: Putative 4'-phosphopantetheinyl transferase HI_0152 (235 aa).

Positions 112, 114, and 155 each coordinate Mg(2+).

This sequence belongs to the P-Pant transferase superfamily. Gsp/Sfp/HetI/AcpT family. Mg(2+) is required as a cofactor.

Its function is as follows. May transfer the 4'-phosphopantetheine moiety from coenzyme A (CoA) to a serine residue of a carrier protein domain. This chain is Putative 4'-phosphopantetheinyl transferase HI_0152, found in Haemophilus influenzae (strain ATCC 51907 / DSM 11121 / KW20 / Rd).